The following is a 404-amino-acid chain: Cysteine desulfurase IscS (404 aa).

Residues 75-76 (AT), asparagine 155, glutamine 183, and 203-205 (SAH) contribute to the pyridoxal 5'-phosphate site. Lysine 206 is subject to N6-(pyridoxal phosphate)lysine. Residue threonine 243 participates in pyridoxal 5'-phosphate binding. Cysteine 328 (cysteine persulfide intermediate) is an active-site residue. Cysteine 328 serves as a coordination point for [2Fe-2S] cluster.

The protein belongs to the class-V pyridoxal-phosphate-dependent aminotransferase family. NifS/IscS subfamily. Homodimer. Forms a heterotetramer with IscU, interacts with other sulfur acceptors. Pyridoxal 5'-phosphate is required as a cofactor.

It localises to the cytoplasm. The catalysed reaction is (sulfur carrier)-H + L-cysteine = (sulfur carrier)-SH + L-alanine. The protein operates within cofactor biosynthesis; iron-sulfur cluster biosynthesis. Master enzyme that delivers sulfur to a number of partners involved in Fe-S cluster assembly, tRNA modification or cofactor biosynthesis. Catalyzes the removal of elemental sulfur atoms from cysteine to produce alanine. Functions as a sulfur delivery protein for Fe-S cluster synthesis onto IscU, an Fe-S scaffold assembly protein, as well as other S acceptor proteins. In Neisseria meningitidis serogroup C / serotype 2a (strain ATCC 700532 / DSM 15464 / FAM18), this protein is Cysteine desulfurase IscS.